The primary structure comprises 1020 residues: Phosphatidylinositol 3-kinase VPS34 (1020 aa).

Residues 49–210 (LSTKFEDPTV…NWLDKMVLPK (162 aa)) form the C2 PI3K-type domain. Residues 331–577 (DKELKPTPQL…DGPIKIYMDI (247 aa)) form the PIK helical domain. The PI3K/PI4K catalytic domain maps to 666 to 1004 (YPEESSVFKS…LINDSVNAFL (339 aa)). Residues 672–678 (VFKSSLA) are G-loop. The tract at residues 873 to 881 (GVGDRHLDN) is catalytic loop. Residues 892 to 913 (HADFGYILGRDPKPFPPLMKLP) are activation loop.

It belongs to the PI3/PI4-kinase family. As to quaternary structure, component of the autophagy-specific VPS34 PI3-kinase complex I composed of at least VPS15, VPS30, VPS34, and of the VPS34 PI3-kinase complex II composed of VPS15, VPS30, VPS34 and VPS38. Interacts with VMNA7. Post-translationally, autophosphorylated.

Its subcellular location is the golgi apparatus. The protein localises to the trans-Golgi network membrane. The protein resides in the endosome membrane. The catalysed reaction is a 1,2-diacyl-sn-glycero-3-phospho-(1D-myo-inositol) + ATP = a 1,2-diacyl-sn-glycero-3-phospho-(1D-myo-inositol-3-phosphate) + ADP + H(+). Its function is as follows. Multifunctional phosphatidylinositol 3-kinase involved in acidification of vacuoles, pH-dependent cell growth, and autophagocytosis. Plays an important role in protein transport and virulence. Component of the autophagy-specific VPS34 PI3-kinase complex I essential to recruit the ATG8-phosphatidylinositol conjugate and the ATG12-ATG5 conjugate to the pre-autophagosomal structure. Also involved in endosome-to-Golgi retrograde transport as part of the VPS34 PI3-kinase complex II. This second complex is required for the endosome-to-Golgi retrieval of PEP1 and KEX2, and the recruitment of VPS5 and VPS7, two components of the retromer complex, to endosomal membranes (probably through the synthesis of a specific pool of phosphatidylinositol 3-phosphate recruiting the retromer to the endosomes). Finally, it might also be involved in ethanol tolerance and cell wall integrity. This Candida albicans (Yeast) protein is Phosphatidylinositol 3-kinase VPS34.